We begin with the raw amino-acid sequence, 37 residues long: uncharacterized protein (37 aa).

The helical transmembrane segment at 13–33 (TFLTIIVLLMIVFGIAIVALL) threads the bilayer.

Its subcellular location is the host membrane. This is an uncharacterized protein from Acidianus convivator (ABV).